A 339-amino-acid polypeptide reads, in one-letter code: Anthranilate phosphoribosyltransferase (339 aa).

5-phospho-alpha-D-ribose 1-diphosphate contacts are provided by residues Gly-81, 84-85 (GD), Thr-89, 91-94 (NIST), 109-117 (KHGNRNLSS), and Thr-121. Gly-81 is a binding site for anthranilate. Residue Ser-93 coordinates Mg(2+). Position 112 (Asn-112) interacts with anthranilate. Residue Arg-167 participates in anthranilate binding. Mg(2+) is bound by residues Asp-226 and Glu-227.

It belongs to the anthranilate phosphoribosyltransferase family. As to quaternary structure, homodimer. The cofactor is Mg(2+).

It carries out the reaction N-(5-phospho-beta-D-ribosyl)anthranilate + diphosphate = 5-phospho-alpha-D-ribose 1-diphosphate + anthranilate. The protein operates within amino-acid biosynthesis; L-tryptophan biosynthesis; L-tryptophan from chorismate: step 2/5. Its function is as follows. Catalyzes the transfer of the phosphoribosyl group of 5-phosphorylribose-1-pyrophosphate (PRPP) to anthranilate to yield N-(5'-phosphoribosyl)-anthranilate (PRA). The chain is Anthranilate phosphoribosyltransferase from Ruegeria pomeroyi (strain ATCC 700808 / DSM 15171 / DSS-3) (Silicibacter pomeroyi).